The following is a 63-amino-acid chain: Large ribosomal subunit protein uL30 (63 aa).

It belongs to the universal ribosomal protein uL30 family. As to quaternary structure, part of the 50S ribosomal subunit.

In Caulobacter sp. (strain K31), this protein is Large ribosomal subunit protein uL30.